The following is a 436-amino-acid chain: NAD(P)-dependent benzaldehyde dehydrogenase (436 aa).

NADP(+) is bound by residues 117-119 (GPF), 143-147 (KPSET), 175-178 (RDEN), 193-194 (GS), 215-216 (EL), Cys-249, and 337-339 (ELF). Active-site residues include Glu-215 and Cys-249.

The protein belongs to the aldehyde dehydrogenase family.

It catalyses the reaction benzaldehyde + NAD(+) + H2O = benzoate + NADH + 2 H(+). The catalysed reaction is benzaldehyde + NADP(+) + H2O = benzoate + NADPH + 2 H(+). It participates in aromatic compound metabolism; (R)-mandelate degradation; benzoate from (R)-mandelate: step 4/4. Functionally, NAD or NADP-dependent benzaldehyde dehydrogenase that catalyzes the conversion of benzaldehyde into benzoate in the (R)-mandelate degradation pathway. This is NAD(P)-dependent benzaldehyde dehydrogenase (mdlD) from Pseudomonas putida (Arthrobacter siderocapsulatus).